A 426-amino-acid polypeptide reads, in one-letter code: UDP-N-acetylglucosamine 1-carboxyvinyltransferase (426 aa).

Phosphoenolpyruvate is bound at residue 22–23 (KN). Arginine 99 serves as a coordination point for UDP-N-acetyl-alpha-D-glucosamine. Cysteine 123 functions as the Proton donor in the catalytic mechanism. Cysteine 123 carries the post-translational modification 2-(S-cysteinyl)pyruvic acid O-phosphothioketal. UDP-N-acetyl-alpha-D-glucosamine-binding positions include 128 to 132 (RPIDL), aspartate 313, and isoleucine 335.

Belongs to the EPSP synthase family. MurA subfamily.

The protein localises to the cytoplasm. It carries out the reaction phosphoenolpyruvate + UDP-N-acetyl-alpha-D-glucosamine = UDP-N-acetyl-3-O-(1-carboxyvinyl)-alpha-D-glucosamine + phosphate. The protein operates within cell wall biogenesis; peptidoglycan biosynthesis. Functionally, cell wall formation. Adds enolpyruvyl to UDP-N-acetylglucosamine. In Zymomonas mobilis subsp. mobilis (strain ATCC 31821 / ZM4 / CP4), this protein is UDP-N-acetylglucosamine 1-carboxyvinyltransferase.